The sequence spans 182 residues: Adenylate kinase (182 aa).

Position 12 to 17 (12 to 17 (GAGKGT)) interacts with ATP. The tract at residues 32 to 61 (STGDLLRDEVSSGSVLGIKAAEIMNKGELV) is NMP. AMP-binding positions include Thr33, Arg38, 59-61 (ELV), 85-88 (GFPR), and Gln92. The interval 126–132 (ERGRQDD) is LID. Residue Arg127 participates in ATP binding. The AMP site is built by Arg129 and Arg140. Ala168 is an ATP binding site.

The protein belongs to the adenylate kinase family. In terms of assembly, monomer.

It localises to the cytoplasm. It catalyses the reaction AMP + ATP = 2 ADP. It functions in the pathway purine metabolism; AMP biosynthesis via salvage pathway; AMP from ADP: step 1/1. In terms of biological role, catalyzes the reversible transfer of the terminal phosphate group between ATP and AMP. Plays an important role in cellular energy homeostasis and in adenine nucleotide metabolism. This is Adenylate kinase from Prochlorococcus marinus (strain NATL1A).